The sequence spans 107 residues: High mobility group protein HMG-I/HMG-Y (107 aa).

Residues 1–107 form a disordered region; that stretch reads MSESSSKSSQ…ISQESSEEEQ (107 aa). At Ser-2 the chain carries N-acetylserine. An N6-acetyllysine modification is found at Lys-7. Position 8 is an ADP-ribosylserine (Ser-8). At Ser-9 the chain carries ADP-ribosylserine; alternate. Phosphoserine; alternate is present on Ser-9. At Lys-15 the chain carries N6-acetyllysine; alternate. Residue Lys-15 forms a Glycyl lysine isopeptide (Lys-Gly) (interchain with G-Cter in SUMO2); alternate linkage. Basic and acidic residues predominate over residues 15–24; it reads KQEKDGTEKR. Positions 21–31 form a DNA-binding region, a.T hook 1; sequence TEKRGRGRPRK. Arg-26 carries the asymmetric dimethylarginine; alternate modification. Arg-26 carries the omega-N-methylarginine; alternate modification. Arg-26 is subject to Symmetric dimethylarginine; alternate. Residue Ser-36 is modified to Phosphoserine; by HIPK2 and CDC2. Residues Thr-39 and Val-42 each carry the phosphothreonine modification. 2 positions are modified to phosphoserine: Ser-44 and Ser-49. Thr-53 carries the phosphothreonine; by HIPK2 and CDC2 modification. The segment at residues 53–63 is a DNA-binding region (a.T hook 2); that stretch reads TPKRPRGRPKG. The segment at 53–77 is interaction with HIPK2; the sequence is TPKRPRGRPKGSKNKGAAKTRKTTT. Basic residues predominate over residues 55-74; sequence KRPRGRPKGSKNKGAAKTRK. Asymmetric dimethylarginine; by PRMT6; alternate occurs at positions 58 and 60. 2 positions are modified to omega-N-methylarginine; by PRMT6; alternate: Arg-58 and Arg-60. Lys-67 bears the Phosphothreonine mark. Thr-78 is modified (phosphothreonine; by HIPK2 and CDC2). The a.T hook 3 DNA-binding region spans 78 to 89; sequence TPGRKPRGRPKK. Residues 93–107 show a composition bias toward acidic residues; it reads EEEEGISQESSEEEQ. Residue Ser-99 is modified to Phosphoserine. Phosphoserine; by CK is present on residues Ser-102 and Ser-103.

This sequence belongs to the HMGA family. In terms of assembly, interacts with HIPK2. Constitutively phosphorylated on two or three sites. Hyperphosphorylated at early stages of apoptosis, followed by dephosphorylation and methylation, which coincides with chromatin condensation. Isoforms HMG-I and HMG-Y can be phosphorylated by HIPK2. Phosphorylation of HMG-I at Ser-36, Thr-53 and Thr-78 and of HMG-Y at Thr-42 and Thr-67 by HIPK2 modulates DNA-binding affinity. Post-translationally, HMG-Y is not methylated. In terms of processing, methylation at Arg-58 is mutually exclusive with methylation at Arg-60.

It localises to the nucleus. Its subcellular location is the chromosome. Its function is as follows. HMG-I/Y bind preferentially to the minor groove of A+T rich regions in double-stranded DNA. It is suggested that these proteins could function in nucleosome phasing and in the 3'-end processing of mRNA transcripts. They are also involved in the transcription regulation of genes containing, or in close proximity to A+T-rich regions. This Homo sapiens (Human) protein is High mobility group protein HMG-I/HMG-Y (HMGA1).